Reading from the N-terminus, the 173-residue chain is Translation initiation factor IF-3 (173 aa).

The protein belongs to the IF-3 family. In terms of assembly, monomer.

The protein localises to the cytoplasm. In terms of biological role, IF-3 binds to the 30S ribosomal subunit and shifts the equilibrium between 70S ribosomes and their 50S and 30S subunits in favor of the free subunits, thus enhancing the availability of 30S subunits on which protein synthesis initiation begins. The chain is Translation initiation factor IF-3 from Neisseria gonorrhoeae (strain ATCC 700825 / FA 1090).